Consider the following 337-residue polypeptide: DNA-directed RNA polymerase subunit alpha (337 aa).

Residues 1–233 (MIQKNWQELI…DQLALFINFK (233 aa)) form an alpha N-terminal domain (alpha-NTD) region. The alpha C-terminal domain (alpha-CTD) stretch occupies residues 249-337 (FNPALLKKVD…DLAKRYEDQY (89 aa)).

Belongs to the RNA polymerase alpha chain family. As to quaternary structure, homodimer. The RNAP catalytic core consists of 2 alpha, 1 beta, 1 beta' and 1 omega subunit. When a sigma factor is associated with the core the holoenzyme is formed, which can initiate transcription.

The enzyme catalyses RNA(n) + a ribonucleoside 5'-triphosphate = RNA(n+1) + diphosphate. Its function is as follows. DNA-dependent RNA polymerase catalyzes the transcription of DNA into RNA using the four ribonucleoside triphosphates as substrates. This chain is DNA-directed RNA polymerase subunit alpha, found in Bartonella henselae (strain ATCC 49882 / DSM 28221 / CCUG 30454 / Houston 1) (Rochalimaea henselae).